We begin with the raw amino-acid sequence, 209 residues long: MADS-box transcription factor 2 (209 aa).

In terms of domain architecture, MADS-box spans 1-61; sequence MGRGKIEIKR…GKLYDYCSPK (61 aa). The 87-residue stretch at 84–170 folds into the K-box domain; the sequence is HKSLSAEIDR…AFKLHQQDIA (87 aa).

In terms of tissue distribution, highly expressed in anthers and carpels. Expressed in pollen, tapetum and stigma.

It is found in the nucleus. Its function is as follows. Probable transcription factor involved in the development of floral organs. B-class protein required for normal development of lodicules (whorl 2). The chain is MADS-box transcription factor 2 (MADS2) from Oryza sativa subsp. japonica (Rice).